A 208-amino-acid chain; its full sequence is MSQAVGNVASIRRKLVIVGDGACGKTCLLIVFAKGKFPQVYVPTVFDNYVADVEVDGRRVELALWDTAGQEDYDRLRPLSYPDSNVVLICYSIDLPDSLENVMEKWISEVLHFCQGVPIILVGCKADLRNDPQVVEELRAQGLQPVSQAQAQEVADQIGAVDYIECSAKTGYGVREVFEAATRASLVGKQGKSKPKTKSSKKKKCVVL.

19–26 (GDGACGKT) provides a ligand contact to GTP. An Effector region motif is present at residues 41-49 (YVPTVFDNY). Residues 66–70 (DTAGQ) and 124–127 (CKAD) contribute to the GTP site. Residues 188 to 208 (GKQGKSKPKTKSSKKKKCVVL) are disordered. The span at 191-208 (GKSKPKTKSSKKKKCVVL) shows a compositional bias: basic residues. A Cysteine methyl ester modification is found at C205. C205 carries S-geranylgeranyl cysteine lipidation. The propeptide at 206–208 (VVL) is removed in mature form.

Belongs to the small GTPase superfamily. Rho family.

The protein resides in the cell membrane. This Kluyveromyces lactis (strain ATCC 8585 / CBS 2359 / DSM 70799 / NBRC 1267 / NRRL Y-1140 / WM37) (Yeast) protein is GTP-binding protein Rho1 (RHO1).